A 180-amino-acid polypeptide reads, in one-letter code: ATP synthase subunit delta (180 aa).

The protein belongs to the ATPase delta chain family. As to quaternary structure, F-type ATPases have 2 components, F(1) - the catalytic core - and F(0) - the membrane proton channel. F(1) has five subunits: alpha(3), beta(3), gamma(1), delta(1), epsilon(1). F(0) has three main subunits: a(1), b(2) and c(10-14). The alpha and beta chains form an alternating ring which encloses part of the gamma chain. F(1) is attached to F(0) by a central stalk formed by the gamma and epsilon chains, while a peripheral stalk is formed by the delta and b chains.

It is found in the cell inner membrane. Its function is as follows. F(1)F(0) ATP synthase produces ATP from ADP in the presence of a proton or sodium gradient. F-type ATPases consist of two structural domains, F(1) containing the extramembraneous catalytic core and F(0) containing the membrane proton channel, linked together by a central stalk and a peripheral stalk. During catalysis, ATP synthesis in the catalytic domain of F(1) is coupled via a rotary mechanism of the central stalk subunits to proton translocation. This protein is part of the stalk that links CF(0) to CF(1). It either transmits conformational changes from CF(0) to CF(1) or is implicated in proton conduction. This chain is ATP synthase subunit delta, found in Acidovorax sp. (strain JS42).